Here is a 329-residue protein sequence, read N- to C-terminus: Probable tyrosine--tRNA ligase, cytoplasmic (329 aa).

Position 35 (Y35) interacts with L-tyrosine. A 'HIGH' region motif is present at residues 40–48 (TTGKPHIAY). Residues Y162, Q166, D169, and Q184 each contribute to the L-tyrosine site. The short motif at 218–222 (KMSSS) is the 'KMSKS' region element.

It belongs to the class-I aminoacyl-tRNA synthetase family. Homodimer.

It is found in the cytoplasm. It carries out the reaction tRNA(Tyr) + L-tyrosine + ATP = L-tyrosyl-tRNA(Tyr) + AMP + diphosphate + H(+). This is Probable tyrosine--tRNA ligase, cytoplasmic from Vairimorpha ceranae (strain BRL01) (Microsporidian parasite).